Reading from the N-terminus, the 258-residue chain is Aspartate/glutamate leucyltransferase (258 aa).

It belongs to the R-transferase family. Bpt subfamily.

It localises to the cytoplasm. It carries out the reaction N-terminal L-glutamyl-[protein] + L-leucyl-tRNA(Leu) = N-terminal L-leucyl-L-glutamyl-[protein] + tRNA(Leu) + H(+). The catalysed reaction is N-terminal L-aspartyl-[protein] + L-leucyl-tRNA(Leu) = N-terminal L-leucyl-L-aspartyl-[protein] + tRNA(Leu) + H(+). Functions in the N-end rule pathway of protein degradation where it conjugates Leu from its aminoacyl-tRNA to the N-termini of proteins containing an N-terminal aspartate or glutamate. This Rhodopseudomonas palustris (strain TIE-1) protein is Aspartate/glutamate leucyltransferase.